The sequence spans 386 residues: ATP synthase subunit a (386 aa).

4 helical membrane passes run 150 to 170 (FTNE…LFFV), 243 to 263 (HFLI…IVGF), 270 to 290 (FFSF…LVLL), and 310 to 330 (MMAG…MLFL).

Belongs to the ATPase A chain family. F-type ATPases have 2 components, CF(1) - the catalytic core - and CF(0) - the membrane proton channel. CF(1) has five subunits: alpha(3), beta(3), gamma(1), delta(1), epsilon(1). CF(0) has three main subunits: a, b and c.

It localises to the mitochondrion inner membrane. Mitochondrial membrane ATP synthase (F(1)F(0) ATP synthase or Complex V) produces ATP from ADP in the presence of a proton gradient across the membrane which is generated by electron transport complexes of the respiratory chain. F-type ATPases consist of two structural domains, F(1) - containing the extramembraneous catalytic core and F(0) - containing the membrane proton channel, linked together by a central stalk and a peripheral stalk. During catalysis, ATP synthesis in the catalytic domain of F(1) is coupled via a rotary mechanism of the central stalk subunits to proton translocation. Key component of the proton channel; it may play a direct role in the translocation of protons across the membrane. The protein is ATP synthase subunit a (ATP6) of Triticum aestivum (Wheat).